Reading from the N-terminus, the 201-residue chain is Orotate phosphoribosyltransferase (201 aa).

5-phospho-alpha-D-ribose 1-diphosphate is bound at residue 113–121; sequence EDIITTGKS. The orotate site is built by Thr-117 and Arg-145.

Belongs to the purine/pyrimidine phosphoribosyltransferase family. PyrE subfamily. Homodimer. Mg(2+) serves as cofactor.

It carries out the reaction orotidine 5'-phosphate + diphosphate = orotate + 5-phospho-alpha-D-ribose 1-diphosphate. Its pathway is pyrimidine metabolism; UMP biosynthesis via de novo pathway; UMP from orotate: step 1/2. Its function is as follows. Catalyzes the transfer of a ribosyl phosphate group from 5-phosphoribose 1-diphosphate to orotate, leading to the formation of orotidine monophosphate (OMP). The protein is Orotate phosphoribosyltransferase of Helicobacter pylori (strain P12).